Consider the following 241-residue polypeptide: Transforming protein p29 (241 aa).

The disordered stretch occupies residues 1-41; sequence MPAARAAPAADEPMRDPVAPVRAPALPRPAPGAVAPASGGA. S-palmitoyl cysteine; by host attachment occurs at residues Cys-233 and Cys-236. A Cysteine methyl ester; by host modification is found at Cys-238. Cys-238 is lipidated: S-farnesyl cysteine; by host. A propeptide spans 239 to 241 (removed in mature form); that stretch reads VLS.

It belongs to the small GTPase superfamily. Ras family.

The protein localises to the host cell membrane. The catalysed reaction is GTP + H2O = GDP + phosphate + H(+). With respect to regulation, alternates between an inactive form bound to GDP and an active form bound to GTP. Activated by a guanine nucleotide-exchange factor (GEF) and inactivated by a GTPase-activating protein (GAP). The protein is Transforming protein p29 (H-RAS) of Mus musculus (Mouse).